We begin with the raw amino-acid sequence, 199 residues long: Nucleoside triphosphate pyrophosphatase (199 aa).

D76 (proton acceptor) is an active-site residue.

It belongs to the Maf family. The cofactor is a divalent metal cation.

Its subcellular location is the cytoplasm. The enzyme catalyses a ribonucleoside 5'-triphosphate + H2O = a ribonucleoside 5'-phosphate + diphosphate + H(+). It carries out the reaction a 2'-deoxyribonucleoside 5'-triphosphate + H2O = a 2'-deoxyribonucleoside 5'-phosphate + diphosphate + H(+). Functionally, nucleoside triphosphate pyrophosphatase. May have a dual role in cell division arrest and in preventing the incorporation of modified nucleotides into cellular nucleic acids. This is Nucleoside triphosphate pyrophosphatase from Ruegeria pomeroyi (strain ATCC 700808 / DSM 15171 / DSS-3) (Silicibacter pomeroyi).